We begin with the raw amino-acid sequence, 180 residues long: Photosystem II extrinsic protein V (180 aa).

An N-terminal signal peptide occupies residues 1-40 (MFSKAFSFQKVFAPARRRLLVLLLAALMAGFGWGLAPVFA). Heme c contacts are provided by cysteine 73, cysteine 76, histidine 77, and histidine 128.

Belongs to the cytochrome c family. PsbV subfamily. PSII is composed of 1 copy each of membrane proteins PsbA, PsbB, PsbC, PsbD, PsbE, PsbF, PsbH, PsbI, PsbJ, PsbK, PsbL, PsbM, PsbT, PsbX, PsbY, PsbZ, Psb30/Ycf12, peripheral proteins PsbO, CyanoQ (PsbQ), PsbU, PsbV and a large number of cofactors. It forms dimeric complexes. Heme c serves as cofactor.

It is found in the cellular thylakoid membrane. Its function is as follows. One of the extrinsic, lumenal subunits of photosystem II (PSII). PSII is a light-driven water plastoquinone oxidoreductase, using light energy to abstract electrons from H(2)O, generating a proton gradient subsequently used for ATP formation. The extrinsic proteins stabilize the structure of photosystem II oxygen-evolving complex (OEC), the ion environment of oxygen evolution and protect the OEC against heat-induced inactivation. Low-potential cytochrome c that plays a role in the OEC of PSII. This Synechococcus sp. (strain JA-2-3B'a(2-13)) (Cyanobacteria bacterium Yellowstone B-Prime) protein is Photosystem II extrinsic protein V.